The following is a 219-amino-acid chain: Interleukin-12 subunit alpha (219 aa).

The signal sequence occupies residues 1 to 22 (MCPARSLLLVATLVLLDYLSLA). N-linked (GlcNAc...) asparagine glycans are attached at residues asparagine 24, asparagine 93, and asparagine 107. 3 cysteine pairs are disulfide-bonded: cysteine 37-cysteine 110, cysteine 64-cysteine 196, and cysteine 85-cysteine 123.

The protein belongs to the IL-6 superfamily. As to quaternary structure, heterodimer with IL12B; disulfide-linked. This heterodimer is known as interleukin IL-12. Heterodimer with EBI3/IL27B; not disulfide-linked. This heterodimer is known as interleukin IL-35. Interacts with NBR1; this interaction promotes IL-12 secretion.

The protein localises to the secreted. Its function is as follows. Heterodimerizes with IL12B to form the IL-12 cytokine or with EBI3/IL27B to form the IL-35 cytokine. IL-12 is primarily produced by professional antigen-presenting cells (APCs) such as B-cells and dendritic cells (DCs) as well as macrophages and granulocytes and regulates T-cell and natural killer-cell responses, induces the production of interferon-gamma (IFN-gamma), favors the differentiation of T-helper 1 (Th1) cells and is an important link between innate resistance and adaptive immunity. Mechanistically, exerts its biological effects through a receptor composed of IL12R1 and IL12R2 subunits. Binding to the receptor results in the rapid tyrosine phosphorylation of a number of cellular substrates including the JAK family kinases TYK2 and JAK2. In turn, recruited STAT4 gets phosphorylated and translocates to the nucleus where it regulates cytokine/growth factor responsive genes. As part of IL-35, plays essential roles in maintaining the immune homeostasis of the liver microenvironment and also functions as an immune-suppressive cytokine. Mediates biological events through unconventional receptors composed of IL12RB2 and gp130/IL6ST heterodimers or homodimers. Signaling requires the transcription factors STAT1 and STAT4, which form a unique heterodimer that binds to distinct DNA sites. The polypeptide is Interleukin-12 subunit alpha (IL12A) (Macaca mulatta (Rhesus macaque)).